The chain runs to 835 residues: Protein bicaudal D homolog 1 (835 aa).

A coiled-coil region spans residues 1–264 (MAAEEALKTV…YINLSDSHIS (264 aa)). The tract at residues 278–297 (EPNNDDKMNGHIHGPLGKLN) is disordered. Positions 320-519 (ELNISEIQKL…TFSEELAQLY (200 aa)) form a coiled coil. Disordered regions lie at residues 545-616 (RSGS…LDTS) and 800-835 (DHEQ…SAHN). Over residues 557–572 (GLLSPRLSRRGVSSPV) the composition is skewed to low complexity. The span at 581-590 (VSKENTETSK) shows a compositional bias: basic and acidic residues. Low complexity predominate over residues 591 to 604 (EPSPTKTPTISPVI). The stretch at 663 to 803 (IDKDKEALME…LEDLEFDHEQ (141 aa)) forms a coiled coil. The segment at 663–803 (IDKDKEALME…LEDLEFDHEQ (141 aa)) is interaction with RAB6A.

It belongs to the BicD family. In terms of assembly, interacts with RAB6A. Interacts (via C-terminus) with RAB6B (GTP-bound); the interaction is direct. Interacts with CLIP-115 and KIFC2. As to expression, expressed in the brain, heart and skeletal muscle.

Its subcellular location is the golgi apparatus. Its function is as follows. Regulates coat complex coatomer protein I (COPI)-independent Golgi-endoplasmic reticulum transport by recruiting the dynein-dynactin motor complex. The sequence is that of Protein bicaudal D homolog 1 (Bicd1) from Mus musculus (Mouse).